A 163-amino-acid chain; its full sequence is Protein-export protein SecB (163 aa).

It belongs to the SecB family. In terms of assembly, homotetramer, a dimer of dimers. One homotetramer interacts with 1 SecA dimer.

The protein resides in the cytoplasm. Functionally, one of the proteins required for the normal export of preproteins out of the cell cytoplasm. It is a molecular chaperone that binds to a subset of precursor proteins, maintaining them in a translocation-competent state. It also specifically binds to its receptor SecA. The sequence is that of Protein-export protein SecB from Burkholderia cenocepacia (strain ATCC BAA-245 / DSM 16553 / LMG 16656 / NCTC 13227 / J2315 / CF5610) (Burkholderia cepacia (strain J2315)).